A 232-amino-acid chain; its full sequence is RNA chaperone ProQ (232 aa).

Residues 105 to 182 (EAKARVQAQR…REEQHTPVSD (78 aa)) are disordered. 2 stretches are compositionally biased toward basic and acidic residues: residues 117 to 138 (QQAKKREAAAAAGEKEDAPPRE) and 147 to 177 (RRKEGAERKPRAQKPVEKAPKTVKAPREEQH).

It belongs to the ProQ family.

Its subcellular location is the cytoplasm. Functionally, RNA chaperone with significant RNA binding, RNA strand exchange and RNA duplexing activities. May regulate ProP activity through an RNA-based, post-transcriptional mechanism. This is RNA chaperone ProQ from Escherichia coli O139:H28 (strain E24377A / ETEC).